Reading from the N-terminus, the 198-residue chain is ADP-ribosylation factor-like protein 3 (198 aa).

At M1 the chain carries N-acetylmethionine. 24–31 (GLDNAGKT) provides a ligand contact to GTP. A Glycyl lysine isopeptide (Lys-Gly) (interchain with G-Cter in ubiquitin) cross-link involves residue K50. Residues 74-78 (DVGGQ) and 133-136 (NKQD) each bind GTP.

It belongs to the small GTPase superfamily. Arf family. As to quaternary structure, interacts with SYS1 and SLO1.

Its subcellular location is the golgi apparatus. Its function is as follows. Involved in the targeting of ARL1 to the Golgi. Can bind and hydrolyze GTP. This chain is ADP-ribosylation factor-like protein 3 (ARL3), found in Saccharomyces cerevisiae (strain ATCC 204508 / S288c) (Baker's yeast).